A 113-amino-acid chain; its full sequence is Large ribosomal subunit protein uL22 (113 aa).

This sequence belongs to the universal ribosomal protein uL22 family. In terms of assembly, part of the 50S ribosomal subunit.

Functionally, this protein binds specifically to 23S rRNA; its binding is stimulated by other ribosomal proteins, e.g. L4, L17, and L20. It is important during the early stages of 50S assembly. It makes multiple contacts with different domains of the 23S rRNA in the assembled 50S subunit and ribosome. The globular domain of the protein is located near the polypeptide exit tunnel on the outside of the subunit, while an extended beta-hairpin is found that lines the wall of the exit tunnel in the center of the 70S ribosome. The polypeptide is Large ribosomal subunit protein uL22 (Magnetococcus marinus (strain ATCC BAA-1437 / JCM 17883 / MC-1)).